The following is a 1082-amino-acid chain: Protein argonaute 1A (1082 aa).

2 disordered regions span residues methionine 17–aspartate 148 and glycine 187–proline 208. Positions glycine 29–threonine 38 are enriched in polar residues. Gly residues predominate over residues glycine 72 to proline 100. Positions proline 420–glutamate 533 constitute a PAZ domain. In terms of domain architecture, Piwi spans leucine 709–glutamate 1030. The disordered stretch occupies residues serine 1036 to valine 1065.

This sequence belongs to the argonaute family. Ago subfamily.

Probably involved in the RNA silencing pathway. May bind to short RNAs such as microRNAs (miRNAs) or short interfering RNAs (siRNAs), and represses the translation of mRNAs which are complementary to them. The chain is Protein argonaute 1A (AGO1A) from Oryza sativa subsp. japonica (Rice).